Reading from the N-terminus, the 711-residue chain is Polyribonucleotide nucleotidyltransferase (711 aa).

D486 and D492 together coordinate Mg(2+). The region spanning 553–612 is the KH domain; sequence PRIHTIKINPDKIKDVIGKGGSVIRALTEETGTTIEIEDDGTVKIAATDGEKAKHAIRRI. Residues 622-690 form the S1 motif domain; it reads GRVYTGKVTR…RQGRIRLSIK (69 aa). A disordered region spans residues 689-711; sequence IKEATEQSQPAAAPEAPAAEQGE. Low complexity predominate over residues 694–711; the sequence is EQSQPAAAPEAPAAEQGE.

The protein belongs to the polyribonucleotide nucleotidyltransferase family. As to quaternary structure, component of the RNA degradosome, which is a multiprotein complex involved in RNA processing and mRNA degradation. Requires Mg(2+) as cofactor.

Its subcellular location is the cytoplasm. The enzyme catalyses RNA(n+1) + phosphate = RNA(n) + a ribonucleoside 5'-diphosphate. Involved in mRNA degradation. Catalyzes the phosphorolysis of single-stranded polyribonucleotides processively in the 3'- to 5'-direction. This is Polyribonucleotide nucleotidyltransferase from Escherichia coli (strain SE11).